A 60-amino-acid chain; its full sequence is Small ribosomal subunit protein eS17 (60 aa).

This sequence belongs to the eukaryotic ribosomal protein eS17 family.

The chain is Small ribosomal subunit protein eS17 from Methanosphaera stadtmanae (strain ATCC 43021 / DSM 3091 / JCM 11832 / MCB-3).